We begin with the raw amino-acid sequence, 377 residues long: N-acetyldiaminopimelate deacetylase (377 aa).

Asp-70 is a catalytic residue. Residue Glu-129 is the Proton acceptor of the active site.

The protein belongs to the peptidase M20A family. N-acetyldiaminopimelate deacetylase subfamily.

The enzyme catalyses N-acetyl-(2S,6S)-2,6-diaminopimelate + H2O = (2S,6S)-2,6-diaminopimelate + acetate. The protein operates within amino-acid biosynthesis; L-lysine biosynthesis via DAP pathway; LL-2,6-diaminopimelate from (S)-tetrahydrodipicolinate (acetylase route): step 3/3. In terms of biological role, catalyzes the conversion of N-acetyl-diaminopimelate to diaminopimelate and acetate. In Streptococcus thermophilus (strain ATCC BAA-491 / LMD-9), this protein is N-acetyldiaminopimelate deacetylase.